Consider the following 113-residue polypeptide: Large ribosomal subunit protein eL36z (113 aa).

Residues 78 to 88 (RKLGTHKRAKR) are compositionally biased toward basic residues. A disordered region spans residues 78–113 (RKLGTHKRAKRKREEMSSVLRKMRSLGGAAAAEKKM).

This sequence belongs to the eukaryotic ribosomal protein eL36 family.

In Arabidopsis thaliana (Mouse-ear cress), this protein is Large ribosomal subunit protein eL36z (RPL36A).